Here is a 1296-residue protein sequence, read N- to C-terminus: ABC transporter B family member 21 (1296 aa).

The interval Met1–Lys59 is disordered. Residues Glu9–Lys59 are compositionally biased toward basic and acidic residues. The helical transmembrane segment at Ile77 to Met97 threads the bilayer. The 289-residue stretch at Met80–Ala368 folds into the ABC transmembrane type-1 1 domain. An N-linked (GlcNAc...) asparagine glycan is attached at Asn113. 5 helical membrane passes run Phe128–Ile148, Ile205–Leu225, Leu227–Ile247, Gly307–Tyr327, and Gly336–Leu356. The region spanning Ile403–Arg639 is the ABC transporter 1 domain. An N-linked (GlcNAc...) asparagine glycan is attached at Asn409. Gly438–Ser445 lines the ATP pocket. N-linked (GlcNAc...) asparagine glycosylation is found at Asn505, Asn519, and Asn590. Residues Leu640 to Lys662 show a composition bias toward basic and acidic residues. Residues Leu640–Ser672 form a disordered region. Residues Ser657 and Ser660 each carry the phosphoserine modification. The ABC transmembrane type-1 2 domain maps to Leu730–Lys1017. The next 2 membrane-spanning stretches (helical) occupy residues Ile731–Ile751 and Ile774–Phe794. N-linked (GlcNAc...) asparagine glycosylation occurs at Asn826. The next 3 membrane-spanning stretches (helical) occupy residues Val865–Ile885, Gly952–Ala972, and Thr986–Ser1006. In terms of domain architecture, ABC transporter 2 spans Ile1052–Gln1289. Residue Gly1087–Ser1094 participates in ATP binding. Asn1141 and Asn1240 each carry an N-linked (GlcNAc...) asparagine glycan.

It belongs to the ABC transporter superfamily. ABCB family. Multidrug resistance exporter (TC 3.A.1.201) subfamily.

The protein resides in the membrane. The polypeptide is ABC transporter B family member 21 (ABCB21) (Arabidopsis thaliana (Mouse-ear cress)).